We begin with the raw amino-acid sequence, 237 residues long: Small ribosomal subunit protein uS5 (237 aa).

Residues 1–59 (MADETNLEGVAAVEATGGEPQREGRGRGRGRGGNDRGGERGGRGRRDDRRGRGNNDEEG) form a disordered region. Residues 20 to 55 (PQREGRGRGRGRGGNDRGGERGGRGRRDDRRGRGNN) are compositionally biased toward basic and acidic residues. The 64-residue stretch at 63–126 (LIEKLVHINR…AAAKRAMVRV (64 aa)) folds into the S5 DRBM domain.

Belongs to the universal ribosomal protein uS5 family. As to quaternary structure, part of the 30S ribosomal subunit. Contacts proteins S4 and S8.

In terms of biological role, with S4 and S12 plays an important role in translational accuracy. Functionally, located at the back of the 30S subunit body where it stabilizes the conformation of the head with respect to the body. The sequence is that of Small ribosomal subunit protein uS5 from Novosphingobium aromaticivorans (strain ATCC 700278 / DSM 12444 / CCUG 56034 / CIP 105152 / NBRC 16084 / F199).